Here is a 739-residue protein sequence, read N- to C-terminus: Thiamine biosynthesis multifunctional protein ThiED (739 aa).

The thiamine-phosphate synthase stretch occupies residues Met1 to Leu210. 4-amino-2-methyl-5-(diphosphooxymethyl)pyrimidine contacts are provided by residues Gln37 to Lys41 and Asn69. 2 residues coordinate Mg(2+): Asp70 and Asp88. Thr107 provides a ligand contact to 4-amino-2-methyl-5-(diphosphooxymethyl)pyrimidine. Thr140–Thr142 contributes to the 2-[(2R,5Z)-2-carboxy-4-methylthiazol-5(2H)-ylidene]ethyl phosphate binding site. Residue Lys143 participates in 4-amino-2-methyl-5-(diphosphooxymethyl)pyrimidine binding. 2-[(2R,5Z)-2-carboxy-4-methylthiazol-5(2H)-ylidene]ethyl phosphate contacts are provided by residues Gly174 and Val194–Ser195. Positions Leu226–Phe481 are hydroxymethylpyrimidine/phosphomethylpyrimidine kinase. Residue Gln263 coordinates 4-amino-5-hydroxymethyl-2-methylpyrimidine. The segment at Tyr527 to Asn739 is thiaminase-2.

This sequence in the N-terminal section; belongs to the thiamine-phosphate synthase family. In the central section; belongs to the ThiD family. The protein in the C-terminal section; belongs to the thiaminase-2 family. The cofactor is Mg(2+).

The enzyme catalyses 2-[(2R,5Z)-2-carboxy-4-methylthiazol-5(2H)-ylidene]ethyl phosphate + 4-amino-2-methyl-5-(diphosphooxymethyl)pyrimidine + 2 H(+) = thiamine phosphate + CO2 + diphosphate. The catalysed reaction is 2-(2-carboxy-4-methylthiazol-5-yl)ethyl phosphate + 4-amino-2-methyl-5-(diphosphooxymethyl)pyrimidine + 2 H(+) = thiamine phosphate + CO2 + diphosphate. It catalyses the reaction 4-methyl-5-(2-phosphooxyethyl)-thiazole + 4-amino-2-methyl-5-(diphosphooxymethyl)pyrimidine + H(+) = thiamine phosphate + diphosphate. It carries out the reaction 4-amino-5-hydroxymethyl-2-methylpyrimidine + ATP = 4-amino-2-methyl-5-(phosphooxymethyl)pyrimidine + ADP + H(+). The enzyme catalyses 4-amino-2-methyl-5-(phosphooxymethyl)pyrimidine + ATP = 4-amino-2-methyl-5-(diphosphooxymethyl)pyrimidine + ADP. It participates in cofactor biosynthesis; thiamine diphosphate biosynthesis; 4-amino-2-methyl-5-diphosphomethylpyrimidine from 5-amino-1-(5-phospho-D-ribosyl)imidazole: step 3/3. The protein operates within cofactor biosynthesis; thiamine diphosphate biosynthesis; thiamine phosphate from 4-amino-2-methyl-5-diphosphomethylpyrimidine and 4-methyl-5-(2-phosphoethyl)-thiazole: step 1/1. In terms of biological role, condenses 4-methyl-5-(beta-hydroxyethyl)thiazole monophosphate (THZ-P) and 2-methyl-4-amino-5-hydroxymethyl pyrimidine pyrophosphate (HMP-PP) to form thiamine monophosphate (TMP). Catalyzes the phosphorylation of hydroxymethylpyrimidine phosphate (HMP-P) to HMP-PP, and of HMP to HMP-P. The protein is Thiamine biosynthesis multifunctional protein ThiED (thiED) of Corynebacterium efficiens (strain DSM 44549 / YS-314 / AJ 12310 / JCM 11189 / NBRC 100395).